Reading from the N-terminus, the 132-residue chain is Large ribosomal subunit protein bL12 (132 aa).

This sequence belongs to the bacterial ribosomal protein bL12 family. In terms of assembly, homodimer. Part of the ribosomal stalk of the 50S ribosomal subunit. Forms a multimeric L10(L12)X complex, where L10 forms an elongated spine to which 2 to 4 L12 dimers bind in a sequential fashion. Binds GTP-bound translation factors.

In terms of biological role, forms part of the ribosomal stalk which helps the ribosome interact with GTP-bound translation factors. Is thus essential for accurate translation. In Chloroflexus aurantiacus (strain ATCC 29366 / DSM 635 / J-10-fl), this protein is Large ribosomal subunit protein bL12.